The primary structure comprises 694 residues: DNA polymerase eta (694 aa).

One can recognise a UmuC domain in the interval 9 to 258 (VALVDMDCFF…MPIRKIRSLG (250 aa)). Asp-13 and Met-14 together coordinate Mg(2+). 2 residues coordinate Mn(2+): Asp-13 and Met-14. Position 61 (Arg-61) interacts with a 2'-deoxyribonucleoside 5'-triphosphate. Residues Asp-115 and Glu-116 each coordinate Mg(2+). The Mn(2+) site is built by Asp-115 and Glu-116. Residue Glu-116 is part of the active site. The interval 565–598 (DSGPDDGAVKPVSSKAVSTEMNVAGDSPNVLDSP) is disordered. The segment at 609–643 (ATEDQVLCEKCDSLVPVWDMPEHTDYHFALELQKS) adopts a UBZ3-type zinc-finger fold. Zn(2+) contacts are provided by Cys-616, Cys-619, His-631, and His-635. The segment at 651–694 (KPQAIPAVSPQGKRNPKSPSASSSKRLRPHGMQTLESFFKPLTH) is disordered. Residues Lys-663, Lys-667, and Lys-675 each participate in a glycyl lysine isopeptide (Lys-Gly) (interchain with G-Cter in ubiquitin) cross-link. Residues 682-689 (MQTLESFF) carry the PIP-box motif. Residue Lys-690 forms a Glycyl lysine isopeptide (Lys-Gly) (interchain with G-Cter in ubiquitin) linkage.

Belongs to the DNA polymerase type-Y family. As to quaternary structure, interacts with REV1. Interacts with monoubiquitinated PCNA, but not unmodified PCNA. Interacts with POLI; this interaction targets POLI to the replication machinery. Interacts with PALB2 and BRCA2; the interactions are direct and are required to sustain the recruitment of POLH at blocked replication forks and to stimulate POLH-dependent DNA synthesis on D loop substrates. Interacts (via C-terminus) with TRAIP. Interacts with ubiquitin. Interacts with POLDIP2. Mg(2+) serves as cofactor. It depends on Mn(2+) as a cofactor. Monoubiquitinated by RCHY1/PIRH2. Ubiquitination depends on integrity of the UBZ3-type zinc finger domain and is enhanced by TRAIP. Ubiquitination inhibits the ability of PolH to interact with PCNA and to bypass UV-induced lesions. In terms of tissue distribution, ubiquitous.

It is found in the nucleus. The enzyme catalyses DNA(n) + a 2'-deoxyribonucleoside 5'-triphosphate = DNA(n+1) + diphosphate. The enzyme in complex with the DNA substrate binds a third divalent metal cation. The binding of this third divalent cation, which is coordinated by water molecules and two oxygen atoms from DNA and dNTP, is essential for catalyzing the DNA synthesis. DNA polymerase specifically involved in the DNA repair by translesion synthesis (TLS). Due to low processivity on both damaged and normal DNA, cooperates with the heterotetrameric (REV3L, REV7, POLD2 and POLD3) POLZ complex for complete bypass of DNA lesions. Inserts one or 2 nucleotide(s) opposite the lesion, the primer is further extended by the tetrameric POLZ complex. In the case of 1,2-intrastrand d(GpG)-cisplatin cross-link, inserts dCTP opposite the 3' guanine. Particularly important for the repair of UV-induced pyrimidine dimers. Although inserts the correct base, may cause base transitions and transversions depending upon the context. May play a role in hypermutation at immunoglobulin genes. Forms a Schiff base with 5'-deoxyribose phosphate at abasic sites, but does not have any lyase activity, preventing the release of the 5'-deoxyribose phosphate (5'-dRP) residue. This covalent trapping of the enzyme by the 5'-dRP residue inhibits its DNA synthetic activity during base excision repair, thereby avoiding high incidence of mutagenesis. Targets POLI to replication foci. The sequence is that of DNA polymerase eta (Polh) from Mus musculus (Mouse).